Here is a 204-residue protein sequence, read N- to C-terminus: N-(5'-phosphoribosyl)anthranilate isomerase (204 aa).

It belongs to the TrpF family.

The catalysed reaction is N-(5-phospho-beta-D-ribosyl)anthranilate = 1-(2-carboxyphenylamino)-1-deoxy-D-ribulose 5-phosphate. The protein operates within amino-acid biosynthesis; L-tryptophan biosynthesis; L-tryptophan from chorismate: step 3/5. The polypeptide is N-(5'-phosphoribosyl)anthranilate isomerase (Pseudomonas fluorescens (strain Pf0-1)).